Consider the following 369-residue polypeptide: Outer membrane protein P2 (369 aa).

The first 20 residues, 1–20 (MKKTLAALIVGAFAASAANA), serve as a signal peptide directing secretion.

This sequence belongs to the Gram-negative porin family. As to quaternary structure, homotrimer.

The protein resides in the cell outer membrane. Functionally, forms pores that allow passive diffusion of small molecules across the outer membrane. The polypeptide is Outer membrane protein P2 (ompP2) (Haemophilus influenzae).